A 675-amino-acid polypeptide reads, in one-letter code: Pescadillo homolog (675 aa).

Residues 309–331 (AGLDEAKEEPAAETTEESSETID) are disordered. The region spanning 352 to 471 (EAGSLFAPFT…RLVRPDLYAP (120 aa)) is the BRCT domain. Residues 475 to 675 (LPPHLSPWVK…RRKLEKGAAK (201 aa)) are disordered. Acidic residues predominate over residues 498-518 (EQEEEGEAELDEDSDEEMEEA). Over residues 519–530 (TSDKKAEAKADV) the composition is skewed to basic and acidic residues. Composition is skewed to acidic residues over residues 532-541 (SESEDEDESV) and 549-580 (GTDD…DEEE). Positions 551-675 (DDDESESEDE…RRKLEKGAAK (125 aa)) form a coiled coil. A compositionally biased stretch (basic and acidic residues) spans 581–591 (AARTQHQKELE). Residues 611–623 (KKASQAKKIAAKK) show a composition bias toward basic residues. Over residues 624-634 (RKEEEELERQK) the composition is skewed to basic and acidic residues.

This sequence belongs to the pescadillo family. As to quaternary structure, component of the NOP7 complex, composed of erb1, nop7 and ytm1. The complex is held together by erb1, which interacts with nop7 via its N-terminal domain and with ytm1 via a high-affinity interaction between the seven-bladed beta-propeller domains of the 2 proteins. The NOP7 complex associates with the 66S pre-ribosome.

The protein resides in the nucleus. It localises to the nucleolus. Its subcellular location is the nucleoplasm. Functionally, component of the NOP7 complex, which is required for maturation of the 25S and 5.8S ribosomal RNAs and formation of the 60S ribosome. This chain is Pescadillo homolog (nop7), found in Aspergillus fumigatus (strain CBS 144.89 / FGSC A1163 / CEA10) (Neosartorya fumigata).